We begin with the raw amino-acid sequence, 75 residues long: Large ribosomal subunit protein uL29 (75 aa).

It belongs to the universal ribosomal protein uL29 family.

This chain is Large ribosomal subunit protein uL29, found in Pyrobaculum aerophilum (strain ATCC 51768 / DSM 7523 / JCM 9630 / CIP 104966 / NBRC 100827 / IM2).